Here is a 907-residue protein sequence, read N- to C-terminus: Probable dipeptidyl-aminopeptidase B (907 aa).

A compositionally biased stretch (basic and acidic residues) spans 1–26; sequence MPRQRAPKEEEAELLTKQERSTRSSE. The segment at 1 to 70 is disordered; the sequence is MPRQRAPKEE…EKYTDEDDEA (70 aa). At 1 to 93 the chain is on the cytoplasmic side; sequence MPRQRAPKEE…PVAVDKKTRR (93 aa). The span at 30 to 44 shows a compositional bias: low complexity; it reads DASVSSISTTSLVLE. A helical; Signal-anchor for type II membrane protein membrane pass occupies residues 94-114; it reads WLWIVGIACVTGWALALVFFL. The Vacuolar portion of the chain corresponds to 115–907; it reads MSGSYKHVST…SQVDARLERR (793 aa). An N-linked (GlcNAc...) asparagine glycan is attached at Asn560. Residue Ser751 is the Charge relay system of the active site. Asn805 carries N-linked (GlcNAc...) asparagine glycosylation. Catalysis depends on charge relay system residues Asp828 and His861.

This sequence belongs to the peptidase S9B family.

The protein localises to the vacuole membrane. The enzyme catalyses Release of an N-terminal dipeptide, Xaa-Yaa-|-Zaa-, from a polypeptide, preferentially when Yaa is Pro, provided Zaa is neither Pro nor hydroxyproline.. Its function is as follows. Type IV dipeptidyl-peptidase which removes N-terminal dipeptides sequentially from polypeptides having unsubstituted N-termini provided that the penultimate residue is proline. The protein is Probable dipeptidyl-aminopeptidase B (dapB) of Pyrenophora teres f. teres (strain 0-1) (Barley net blotch fungus).